The following is a 280-amino-acid chain: MRHTLPIAPQFYVTAPQSCPYLEGRLERKLFTALQGEHAQKLNDTLSKQGFRRSQNVLYRPSCAECSACLSARIRVADFEPTRTQRRVMKRNADLRRNATSPWATEDQYALFRRYLDDRHADGGMADMDIFEFAAMIEETPIRSRVIEYSRPGDTPSNRPLSAVCLTDIFDDGLSMVYSFYDPDLAGRSLGAYVILDHIEIAREAGLPYVYLGYWVPGSRKMGYKATYSALEIYKGGRWQAIGQPSDHRAELHPLSVDPIAEQVARISLPEARSGDRSRD.

Belongs to the R-transferase family. Bpt subfamily.

The protein localises to the cytoplasm. The enzyme catalyses N-terminal L-glutamyl-[protein] + L-leucyl-tRNA(Leu) = N-terminal L-leucyl-L-glutamyl-[protein] + tRNA(Leu) + H(+). It catalyses the reaction N-terminal L-aspartyl-[protein] + L-leucyl-tRNA(Leu) = N-terminal L-leucyl-L-aspartyl-[protein] + tRNA(Leu) + H(+). Functions in the N-end rule pathway of protein degradation where it conjugates Leu from its aminoacyl-tRNA to the N-termini of proteins containing an N-terminal aspartate or glutamate. In Cereibacter sphaeroides (strain ATCC 17023 / DSM 158 / JCM 6121 / CCUG 31486 / LMG 2827 / NBRC 12203 / NCIMB 8253 / ATH 2.4.1.) (Rhodobacter sphaeroides), this protein is Aspartate/glutamate leucyltransferase.